We begin with the raw amino-acid sequence, 876 residues long: GATOR2 complex protein MIOS (876 aa).

6 WD repeats span residues 59 to 101 (SDTP…NSKS), 112 to 156 (KHAR…SPEA), 182 to 222 (GQND…QKTF), 224 to 262 (NTKAIQGVTVDPHFQDRVASYFEGQVAIWDLRKFEKPVF), 266 to 307 (EQPK…MPFG), and 400 to 440 (RAQS…KQYT). The C4-type zinc-finger motif lies at 738–784 (VSCNFCGKSISYSCSAMPHQGRGFSQYGVSGSPTKSKVTSCPGCRKP). Positions 740, 743, 778, 781, 791, 830, 833, 835, 838, 841, 852, 857, and 861 each coordinate Zn(2+). An RING-type; atypical zinc finger spans residues 785–866 (LPRCALCLMN…CTCKCMQLDT (82 aa)).

Belongs to the WD repeat mio family. As to quaternary structure, component of the GATOR2 subcomplex, composed of MIOS, SEC13, SEH1L, WDR24 and WDR59. The GATOR2 complex interacts with CASTOR1 and CASTOR2; the interaction is negatively regulated by arginine. The GATOR2 complex interacts with SESN1, SESN2 and SESN3; the interaction is negatively regulated by amino acids. Interacts with SAR1; the interaction is direct, disrupted by leucine and mediates the interaction of SAR1 with the GATOR2 complex to negatively regulate the TORC1 signaling upon leucine deprivation.

Its subcellular location is the lysosome membrane. With respect to regulation, the GATOR2 complex is negatively regulated by the upstream amino acid sensors CASTOR1 and SESN2, which sequester the GATOR2 complex in absence of amino acids. In the presence of abundant amino acids, GATOR2 is released from CASTOR1 and SESN2 and activated. In terms of biological role, as a component of the GATOR2 complex, functions as an activator of the amino acid-sensing branch of the mTORC1 signaling pathway. The GATOR2 complex indirectly activates mTORC1 through the inhibition of the GATOR1 subcomplex. GATOR2 probably acts as an E3 ubiquitin-protein ligase toward GATOR1. In the presence of abundant amino acids, the GATOR2 complex mediates ubiquitination of the NPRL2 core component of the GATOR1 complex, leading to GATOR1 inactivation. In the absence of amino acids, GATOR2 is inhibited, activating the GATOR1 complex. Within the GATOR2 complex, MIOS is required to prevent autoubiquitination of WDR24, the catalytic subunit of the complex. In Danio rerio (Zebrafish), this protein is GATOR2 complex protein MIOS.